Here is a 126-residue protein sequence, read N- to C-terminus: UPF0047 protein AF_2050 (126 aa).

Belongs to the UPF0047 family.

The protein is UPF0047 protein AF_2050 of Archaeoglobus fulgidus (strain ATCC 49558 / DSM 4304 / JCM 9628 / NBRC 100126 / VC-16).